The primary structure comprises 127 residues: KP4 killer toxin (127 aa).

The first 22 residues, Met1–Ser22, serve as a signal peptide directing secretion. 5 cysteine pairs are disulfide-bonded: Cys27-Cys100, Cys33-Cys103, Cys49-Cys89, Cys57-Cys82, and Cys66-Cys127.

As to quaternary structure, monomer.

It localises to the secreted. Its function is as follows. This protein is lethal to sensitive cells of the same or related species. It specifically inhibits voltage-gated calcium channels. It inhibits cell growth and division by blocking calcium import. The protein is KP4 killer toxin (M2A) of Mycosarcoma maydis (Corn smut fungus).